Consider the following 867-residue polypeptide: Prominin-1 (867 aa).

The signal sequence occupies residues 1–19 (MALVFSALLLLGLCGKISS). Residues 20–107 (EGQPAFHNTP…VLALKIALYE (88 aa)) are Extracellular-facing. Residues 108 to 128 (IGVLICAILGLLFIILMPLVG) form a helical membrane-spanning segment. Topologically, residues 129–158 (CFFCMCRCCNKCGGEMHQRQKQNAPCRRKC) are cytoplasmic. The chain crosses the membrane as a helical span at residues 159–179 (LGLSLLVICLLMSLGIIYGFV). The Extracellular portion of the chain corresponds to 180-434 (ANQQTRTRIK…LPKLEEYDSY (255 aa)). 3 positions are modified to N6-acetyllysine: K226, K258, and K265. 5 N-linked (GlcNAc...) asparagine glycosylation sites follow: N273, N291, N332, N374, and N415. The chain crosses the membrane as a helical span at residues 435–455 (WWLGGLIVCFLLTLIVTFFFL). At 456 to 487 (GLLCGVFGYDKHATPTRRGCVSNTGGIFLMAG) the chain is on the cytoplasmic side. The chain crosses the membrane as a helical span at residues 488 to 508 (VGFGFLFCWILMILVVLTFVV). The Extracellular portion of the chain corresponds to 509–794 (GANVEKLLCE…LCGYVADPLN (286 aa)). Residues N554, N581, and N732 are each glycosylated (N-linked (GlcNAc...) asparagine). The helical transmembrane segment at 795 to 815 (LFWFGIGKATVLLLPAVIIAI) threads the bilayer. At 816-867 (KLAKYYRRMDSEDVYDDVETVPMKNLEIGSNGYHKDHLYGVHNPVMTSPSRY) the chain is on the cytoplasmic side. At S865 the chain carries Phosphoserine.

The protein belongs to the prominin family. In terms of assembly, interacts with CDHR1 and with actin filaments. Interacts with NAT8 and NAT8B. Post-translationally, acetylation at Lys-226, Lys-258 and Lys-265 by NAT8 and NAT8B may control PROM1 protein expression and its function in cell apoptosis. In the submandibular gland, expressed on the apical side of epithelial cells. In the parotid gland, expressed in the intercalated ducts. In the sublingual gland, expressed in intercalated ducts. In the extraorbital lacrimal gland, expressed in the intercalated tubules and larger intralobular ducts. Expressed in the retina. Present in urine within small membrane particles (at protein level). In the embryo, expressed on the apical side of neuroepithelial cells and of other epithelia such as lung buds, gut and ureter buds. In the adult, expressed at the apical side of the kidney tubules and of the ependymal layer of the brain. Not expressed in gut, liver, lung, pituitary, adrenal, heart or spleen. Localized to the nascent disk membranes at the base of the rod outer segment in the retina (at protein level).

It is found in the apical cell membrane. The protein resides in the cell projection. Its subcellular location is the microvillus membrane. It localises to the cilium. The protein localises to the photoreceptor outer segment. It is found in the endoplasmic reticulum. The protein resides in the endoplasmic reticulum-Golgi intermediate compartment. Its function is as follows. May play a role in cell differentiation, proliferation and apoptosis. Binds cholesterol in cholesterol-containing plasma membrane microdomains and may play a role in the organization of the apical plasma membrane in epithelial cells. During early retinal development acts as a key regulator of disk morphogenesis. Involved in regulation of MAPK and Akt signaling pathways. In neuroblastoma cells suppresses cell differentiation such as neurite outgrowth in a RET-dependent manner. The chain is Prominin-1 (Prom1) from Mus musculus (Mouse).